Reading from the N-terminus, the 284-residue chain is S-formylglutathione hydrolase (284 aa).

At alanine 2 the chain carries N-acetylalanine. Positions 63 and 67 each coordinate substrate. Residues serine 152, aspartate 229, and histidine 262 each act as charge relay system in the active site.

Belongs to the esterase D family. In terms of assembly, homodimer.

The catalysed reaction is S-formylglutathione + H2O = formate + glutathione + H(+). Its activity is regulated as follows. Activity toward p-nitrophenyl acetate inhibited by N-ethylmaleimide, 10-(fluoroethoxyphosphinyl)-N-(biotinamidopentyl)decanamide (FP-biotin), iodoacetamide, CuCl(2) and ZnSO(4), but not by phenylmethylsulfonyl fluoride, EDTA, Mg(2+), Mn(2+), Ca(2+) or paraoxon, an organo-phosphate inhibitor of serine hydrolases. Functionally, serine hydrolase which catalyzes the hydrolysis of S-formylglutathione to glutathione and formic acid. Also hydrolyzes S-acetylglutathione and a range of carboxyesters in vitro. Involved in the detoxification of formaldehyde. The chain is S-formylglutathione hydrolase (SFGH) from Arabidopsis thaliana (Mouse-ear cress).